The following is a 1192-amino-acid chain: MARRSQSSSLGDNPLDPNYLRPHYREEYRMAIDALVEDDIEGYYNFLQNANVVDFLSRSEIENIKSTVQTPQSAGNVPELPYGEIDQDESSDTYWPLHSDLDAPGLDLGWPMQQHSFVGPTEVTMLVNPAEPERPSIKEQARRLIKNAHQVIAVVMDIFTDVDIFSDLLEAAARHVPVYILLDEQNAHYFVNMVASCKVNLEMIHMMRVRTVSGVTYFCRTGKSFKGQVMDRFLLTDCRAVISGNYSFMWSFEKIHRCIAHLFLGELVATFDEEFRILFAQSQPLVVENALVPMPQDSYLGNQFGLKRTQSLRNPRGYLRQPELGGYQYGDRLDSILPFRRDDPFRHTIEPSAGPMQVTKYATQQFRMQQSFLDQGRSMLASRQLEMNAFKRHSYAEGTRETYASSRQYMKQRVMNNLEETESHYQREQHYYQSEGMGHDDRGHYDRFNYGLADQHSDSGYPPELEAPGNINVLSSDDLKSDSEKQYNIGGRYDPQGHKRPAAGHAYACQSSPTQPHPPDQKQLFSTGDQVRQSQDPSVKQGLRSWRINSYLSTYEDGGEEGLHQPMGSDAFEDSHQQPDSRLYGSEGPGIHSNIRERPNIPTKPNLDLRPRFGKPIIQDRNQVKDNTSDLGPTSTDTLKPAISASSLASSTDNEKELAEPREISITKHESFRTRINPMLQRSSRLRSSLIFSSSKLEQHNSSQAKSGGELQEEKEESEPIRYSSIVAEILEKRRSLSREPFDWNKHKKADEKDVKHASTGDLTTIQDTKEEPIKEKEKPDNPKPEENKVTQPTVPSASQQITSSLNMNDPASRLQYFKDQQEKRKTSKLELDLGTKSQEAAIKKPETLDTATKVPDVLLTSEQSTVKAQEPTVSQTDPVPHRPVIETKPKPSEVSVDRPYTTNKTLTESIADAPKKEPVKEPTKSLKPFPSPKFLKPFKSSQSSSRRISCGEEILTDATDAEKSELKKSRSFSTSGMSRTESRESLSSLGNSESKDTKALDFLKKQTQRLKGILGPKGDKKHSGVSNSQEDKSMKTVPEVQEEISDKGKPSESISSSTAVENKPSAKPTTSRYQSSTSNIIFSSNLRDDTKVILEQISANSQKTRQQNEESGKGDGGKDDVANSPFQSRNRFSRAPVNPQERDNLLKRIESMRKEKKVYSRFEVLYRSREECCWERGSVEQANQFLIKSIE.

5 disordered regions span residues 435-542, 557-661, 695-720, 737-1082, and 1094-1145; these read EGMG…VKQG, DGGE…LAEP, SKLE…ESEP, LSRE…SNII, and ILEQ…ERDN. A compositionally biased stretch (basic and acidic residues) spans 437–447; that stretch reads MGHDDRGHYDR. Composition is skewed to polar residues over residues 523–538 and 629–652; these read QLFS…QDPS and SDLG…ASST. Composition is skewed to basic and acidic residues over residues 737–759 and 768–789; these read LSRE…KHAS and DTKE…EENK. The span at 790–810 shows a compositional bias: polar residues; it reads VTQPTVPSASQQITSSLNMND. Basic and acidic residues predominate over residues 820 to 834; sequence DQQEKRKTSKLELDL. Polar residues predominate over residues 861–878; it reads TSEQSTVKAQEPTVSQTD. Composition is skewed to basic and acidic residues over residues 880–892 and 914–925; these read VPHR…KPKP and APKKEPVKEPTK. A compositionally biased stretch (low complexity) spans 926–946; sequence SLKPFPSPKFLKPFKSSQSSS. Residues 994–1005 show a composition bias toward basic and acidic residues; that stretch reads ESKDTKALDFLK. Residues 1068–1082 show a composition bias toward polar residues; sequence KPTTSRYQSSTSNII. A compositionally biased stretch (basic and acidic residues) spans 1107-1122; sequence QQNEESGKGDGGKDDV.

This sequence belongs to the FAM83 family.

The protein resides in the cytoplasm. The protein localises to the cytoskeleton. Functionally, may play a role in keratin cytoskeleton disassembly. The polypeptide is Protein FAM83H (Danio rerio (Zebrafish)).